A 558-amino-acid polypeptide reads, in one-letter code: MAAQRVAMRNIKECLRLKFEGGLSHEKIARALQLSKGVVSKYVTAAAETGMEWPALAVLDEVALAAALLPTARVRQTRGERVLPDLITIHRELRRKGVTLQLLWEEYVAAHPEQPTYRYTQFVEHYRRYASTLKRSMRQQHRAGEKLFIDYAGPTLPVIDPATGEISRAHIFVAALGASNYTYACATPGETQVDWLTALGQAFSYFGGVSEMVVPDNPRALIAHPDRYEPGLNRAALECARHYDTVMLPARPRKPQDKAKAEVAVQVVERWIMRVRHQQFFSLHALNQAIAKLLEDLNQRPFKKLDGCRREWFERLDQPVLRPLPQHPYEVVTFKRCKVNIDYHIEVNGGFYSVPSALARQSVDVRLSAHTVEVLHGNRRVASHLRLQRRGAYSTQSEHMPASHKAHREWTPQRLLDWGERIGPQTRQIVEHQLTHKPHPEMGYRACLGLLSLARQYGNARLEAAASRAVQLRALNGRTVRNLLKQGLDQQPLPKPATPAAQPSSHENVRGADYYTQEELFDDDPTHPEPIAPTAAGRHGPSTGRTMDAAGQPQPELR.

Positions 11–93 constitute an HTH IS408-type domain; sequence IKECLRLKFE…PDLITIHREL (83 aa). Residues 23–44 constitute a DNA-binding region (H-T-H motif); sequence LSHEKIARALQLSKGVVSKYVT. An Integrase catalytic domain is found at 139 to 336; that stretch reads QQHRAGEKLF…HPYEVVTFKR (198 aa). The tract at residues 486-558 is disordered; the sequence is QGLDQQPLPK…AAGQPQPELR (73 aa).

It belongs to the transposase IS21/IS408/IS1162 family.

Functionally, required for the transposition of the insertion element. This Pseudomonas fluorescens protein is Putative transposase for insertion sequence IS1162.